The primary structure comprises 372 residues: Probable O-methyltransferase 2 (372 aa).

Residues Gly216, Asp259, and Lys273 each coordinate S-adenosyl-L-methionine. Catalysis depends on His277, which acts as the Proton acceptor.

Belongs to the class I-like SAM-binding methyltransferase superfamily. Cation-independent O-methyltransferase family. COMT subfamily. In terms of assembly, homodimer. As to expression, expressed predominantly in root hairs.

Functionally, O-methyltransferase of unknown substrate specificity. Not active on resorcinol, orcinol, guaiacol, eugenol, ferulic acid, p-coumaric acid, catechol, caffeic acid or monomethyl ethers of resorcinol or orcinol. In Sorghum bicolor (Sorghum), this protein is Probable O-methyltransferase 2 (OMT2).